Reading from the N-terminus, the 457-residue chain is uncharacterized protein (457 aa).

Residues 10-69 (ALLQGQTVTVPITALAAGGDGIARLTDGRVLFVAGAVPGDTVEARLVHLKKDHGFGKILQ) form the TRAM domain. [4Fe-4S] cluster contacts are provided by cysteine 82, cysteine 88, cysteine 91, and cysteine 170. 4 residues coordinate S-adenosyl-L-methionine: glutamine 294, tyrosine 323, glutamate 344, and aspartate 387. Cysteine 414 (nucleophile) is an active-site residue.

It belongs to the class I-like SAM-binding methyltransferase superfamily. RNA M5U methyltransferase family.

This is an uncharacterized protein from Gloeobacter violaceus (strain ATCC 29082 / PCC 7421).